The chain runs to 459 residues: ATP synthase subunit beta (459 aa).

148-155 (GGAGVGKT) is a binding site for ATP.

It belongs to the ATPase alpha/beta chains family. As to quaternary structure, F-type ATPases have 2 components, CF(1) - the catalytic core - and CF(0) - the membrane proton channel. CF(1) has five subunits: alpha(3), beta(3), gamma(1), delta(1), epsilon(1). CF(0) has three main subunits: a(1), b(2) and c(9-12). The alpha and beta chains form an alternating ring which encloses part of the gamma chain. CF(1) is attached to CF(0) by a central stalk formed by the gamma and epsilon chains, while a peripheral stalk is formed by the delta and b chains.

The protein localises to the cell inner membrane. It carries out the reaction ATP + H2O + 4 H(+)(in) = ADP + phosphate + 5 H(+)(out). Functionally, produces ATP from ADP in the presence of a proton gradient across the membrane. The catalytic sites are hosted primarily by the beta subunits. This is ATP synthase subunit beta from Burkholderia mallei (strain NCTC 10229).